Reading from the N-terminus, the 689-residue chain is Glycine--tRNA ligase beta subunit (689 aa).

Belongs to the class-II aminoacyl-tRNA synthetase family. In terms of assembly, tetramer of two alpha and two beta subunits.

The protein localises to the cytoplasm. The enzyme catalyses tRNA(Gly) + glycine + ATP = glycyl-tRNA(Gly) + AMP + diphosphate. The protein is Glycine--tRNA ligase beta subunit of Klebsiella pneumoniae subsp. pneumoniae (strain ATCC 700721 / MGH 78578).